The primary structure comprises 194 residues: Mediator of RNA polymerase II transcription subunit 8 (194 aa).

This sequence belongs to the Mediator complex subunit 8 family. In terms of assembly, component of the Mediator complex.

It localises to the nucleus. Its function is as follows. Component of the Mediator complex, a coactivator involved in the regulated transcription of nearly all RNA polymerase II-dependent genes. Mediator functions as a bridge to convey information from gene-specific regulatory proteins to the basal RNA polymerase II transcription machinery. Mediator is recruited to promoters by direct interactions with regulatory proteins and serves as a scaffold for the assembly of a functional preinitiation complex with RNA polymerase II and the general transcription factors. This is Mediator of RNA polymerase II transcription subunit 8 (MED8) from Yarrowia lipolytica (strain CLIB 122 / E 150) (Yeast).